Consider the following 368-residue polypeptide: Cell division protein FtsZ 1 (368 aa).

GTP contacts are provided by residues 52–56, 139–141, Glu170, Arg174, and Asp217; these read GGGCN and GTG.

This sequence belongs to the FtsZ family. Homodimer. Polymerizes to form a dynamic ring structure in a strictly GTP-dependent manner. Interacts directly with several other division proteins.

Its subcellular location is the cytoplasm. In terms of biological role, essential cell division protein that forms a contractile ring structure (Z ring) at the future cell division site. The regulation of the ring assembly controls the timing and the location of cell division. One of the functions of the FtsZ ring is to recruit other cell division proteins to the septum to produce a new cell wall between the dividing cells. Binds GTP and shows GTPase activity. This is Cell division protein FtsZ 1 from Archaeoglobus fulgidus (strain ATCC 49558 / DSM 4304 / JCM 9628 / NBRC 100126 / VC-16).